Reading from the N-terminus, the 257-residue chain is Putative hydro-lyase Bcenmc03_3969 (257 aa).

It belongs to the D-glutamate cyclase family.

This chain is Putative hydro-lyase Bcenmc03_3969, found in Burkholderia orbicola (strain MC0-3).